A 579-amino-acid chain; its full sequence is DELLA protein RGA2 (579 aa).

Residues 1–31 (MKRDLHQFQGPPDTRFPNHGTANTGSSSKDK) are disordered. The short motif at 45 to 49 (DELLA) is the DELLA motif element. Composition is skewed to low complexity over residues 149–162 (SSSS…NSQS) and 174–183 (SLVTGTTVTT). Residues 149-183 (SSSSSNQAGDNSQSTKRLKSCSSPDSLVTGTTVTT) form a disordered region. The 370-residue stretch at 205–574 (VDSQENGVRL…RPLITTSAWK (370 aa)) folds into the GRAS domain. The segment at 212 to 266 (VRLVHALMACAEAIQNNDLSIAEALVKQIGFLAVSQAGAMRKVATYFAEALARRI) is leucine repeat I (LRI). Positions 285–350 (QMHFYETCPY…GGPPVFRLTG (66 aa)) are VHIID. Residues 316 to 320 (VHVID) carry the VHIID motif. The segment at 364 to 396 (EVGCKLAQLAEAIHVEFEYRGFVANSLADLDAS) is leucine repeat II (LRII). Residues 408–495 (VAVNSVFELH…EVYLGKQICN (88 aa)) are PFYRE. An LXXLL motif motif is present at residues 416–420 (LHKLL). Positions 498–574 (ACEGPDRVER…RPLITTSAWK (77 aa)) are SAW.

The protein belongs to the GRAS family. DELLA subfamily. Phosphorylated. In terms of processing, ubiquitinated. Upon GA application it is ubiquitinated, leading to its subsequent degradation.

It localises to the nucleus. Functionally, probable transcriptional regulator that acts as a repressor of the gibberellin (GA) signaling pathway. Probably acts by participating in large multiprotein complexes that represses transcription of GA-inducible genes. Upon GA application, it is degraded by the proteasome, allowing the GA signaling pathway. In Brassica campestris (Field mustard), this protein is DELLA protein RGA2 (RGA2).